Consider the following 49-residue polypeptide: Small ribosomal subunit protein eS31 (49 aa).

Cysteine 21, cysteine 24, cysteine 39, and cysteine 42 together coordinate Zn(2+). The C4-type zinc-finger motif lies at 21–42; that stretch reads CPRCGNGVFLAEHEDRMSCGRC.

The protein belongs to the eukaryotic ribosomal protein eS31 family. As to quaternary structure, part of the 30S ribosomal subunit. It depends on Zn(2+) as a cofactor.

The sequence is that of Small ribosomal subunit protein eS31 from Methanothrix thermoacetophila (strain DSM 6194 / JCM 14653 / NBRC 101360 / PT) (Methanosaeta thermophila).